Here is a 78-residue protein sequence, read N- to C-terminus: Acyl carrier protein 1 (78 aa).

A Carrier domain is found at 2–77 (STIEERVKKI…EAIDYIVAHQ (76 aa)). Ser-37 carries the post-translational modification O-(pantetheine 4'-phosphoryl)serine.

This sequence belongs to the acyl carrier protein (ACP) family. Post-translationally, 4'-phosphopantetheine is transferred from CoA to a specific serine of apo-ACP by AcpS. This modification is essential for activity because fatty acids are bound in thioester linkage to the sulfhydryl of the prosthetic group.

The protein resides in the cytoplasm. It functions in the pathway lipid metabolism; fatty acid biosynthesis. In terms of biological role, carrier of the growing fatty acid chain in fatty acid biosynthesis. The chain is Acyl carrier protein 1 from Pseudomonas aeruginosa (strain ATCC 15692 / DSM 22644 / CIP 104116 / JCM 14847 / LMG 12228 / 1C / PRS 101 / PAO1).